Here is a 373-residue protein sequence, read N- to C-terminus: 4-hydroxy-3-methylbut-2-en-1-yl diphosphate synthase (flavodoxin) (373 aa).

The [4Fe-4S] cluster site is built by cysteine 270, cysteine 273, cysteine 305, and glutamate 312.

The protein belongs to the IspG family. [4Fe-4S] cluster serves as cofactor.

It carries out the reaction (2E)-4-hydroxy-3-methylbut-2-enyl diphosphate + oxidized [flavodoxin] + H2O + 2 H(+) = 2-C-methyl-D-erythritol 2,4-cyclic diphosphate + reduced [flavodoxin]. Its pathway is isoprenoid biosynthesis; isopentenyl diphosphate biosynthesis via DXP pathway; isopentenyl diphosphate from 1-deoxy-D-xylulose 5-phosphate: step 5/6. In terms of biological role, converts 2C-methyl-D-erythritol 2,4-cyclodiphosphate (ME-2,4cPP) into 1-hydroxy-2-methyl-2-(E)-butenyl 4-diphosphate. This Photorhabdus laumondii subsp. laumondii (strain DSM 15139 / CIP 105565 / TT01) (Photorhabdus luminescens subsp. laumondii) protein is 4-hydroxy-3-methylbut-2-en-1-yl diphosphate synthase (flavodoxin).